We begin with the raw amino-acid sequence, 353 residues long: Ornithine racemase (353 aa).

Lys35 serves as the catalytic Proton acceptor. Lys35 carries the post-translational modification N6-(pyridoxal phosphate)lysine. Substrate is bound at residue Arg128.

This sequence belongs to the alanine racemase family. In terms of assembly, homodimer. It depends on pyridoxal 5'-phosphate as a cofactor.

It catalyses the reaction L-ornithine = D-ornithine. Involved in the ornithine fermentation pathway. Catalyzes the conversion of L-ornithine to D-ornithine. OR could also racemize basic amino acids such as lysine and arginine. Serine, asparagine and alanine could be also converted by OR, but at a lower rate. The polypeptide is Ornithine racemase (Acetoanaerobium sticklandii (strain ATCC 12662 / DSM 519 / JCM 1433 / CCUG 9281 / NCIMB 10654 / HF) (Clostridium sticklandii)).